Consider the following 207-residue polypeptide: Small ribosomal subunit protein uS3c (207 aa).

In terms of domain architecture, KH type-2 spans 39-109 (IRDYIFTNLL…QLKINIIDVT (71 aa)).

Belongs to the universal ribosomal protein uS3 family. As to quaternary structure, part of the 30S ribosomal subunit.

The protein localises to the plastid. The protein resides in the chloroplast. This is Small ribosomal subunit protein uS3c (rps3) from Cyanidium caldarium (Red alga).